A 325-amino-acid chain; its full sequence is Large ribosomal subunit protein uL1m (325 aa).

The N-terminal 50 residues, 1–50, are a transit peptide targeting the mitochondrion; the sequence is MAATVRCFGRVLIHHQRCSLATVTSQTSLYPCCIYVPVPNRHFAAAAKPA. Residues 47-66 are disordered; that stretch reads AKPAKKTKKGTKEKASNEKK. A compositionally biased stretch (basic and acidic residues) spans 56-66; the sequence is GTKEKASNEKK.

Belongs to the universal ribosomal protein uL1 family.

It is found in the mitochondrion. This chain is Large ribosomal subunit protein uL1m (MRPL1), found in Bos taurus (Bovine).